The sequence spans 345 residues: Solute carrier family 25 member 43 (345 aa).

Solcar repeat units follow at residues T11–L100, S104–H195, and T199–N297. The next 6 membrane-spanning stretches (helical) occupy residues L16–V36, F67–A87, I109–V129, G165–I185, F204–V224, and V261–L281.

The protein belongs to the mitochondrial carrier (TC 2.A.29) family.

Its subcellular location is the mitochondrion inner membrane. The sequence is that of Solute carrier family 25 member 43 (slc25a43) from Danio rerio (Zebrafish).